The chain runs to 1096 residues: Lysine-specific demethylase PHF2 (1096 aa).

The segment at 5-56 adopts a PHD-type zinc-finger fold; it reads PVYCVCRLPYDVTRFMIECDACKDWFHGSCVGVEEEEAPDIDIYHCPNCEKT. Positions 193 and 246 each coordinate 2-oxoglutarate. Residues 197-353 form the JmjC domain; sequence FSDTRMSSFV…MQMRAYEVER (157 aa). 2 residues coordinate Fe cation: histidine 249 and aspartate 251. Residues tyrosine 259 and lysine 266 each coordinate 2-oxoglutarate. Tyrosine 321 is a Fe cation binding site. Threonine 323 provides a ligand contact to 2-oxoglutarate. Residues 448–630 are disordered; sequence TVRPEVNAAA…KSPLAGNKDK (183 aa). At serine 474 the chain carries Phosphoserine. Threonine 479 carries the phosphothreonine modification. Positions 503-515 are enriched in pro residues; sequence SKIPKPPKSPKPP. Serine 536 is subject to Phosphoserine. 2 stretches are compositionally biased toward basic and acidic residues: residues 545 to 560 and 575 to 630; these read LEAHTKEALTKMEPPK and DTVH…NKDK. Phosphoserine occurs at positions 651, 677, and 701. Residue lysine 707 forms a Glycyl lysine isopeptide (Lys-Gly) (interchain with G-Cter in SUMO2) linkage. Position 716 is an N6-acetyllysine (lysine 716). 3 disordered regions span residues 719–755, 811–841, and 871–1080; these read LDSAVYKSDDSSDEGSLHIDTDTKPGRNAKVKKESGS, WGTGQAKGGSLAAHGARKIGGGNKGTGKRLL, and YPSL…TAKQ. Tyrosine 724 is modified (phosphotyrosine). Over residues 725-753 the composition is skewed to basic and acidic residues; it reads KSDDSSDEGSLHIDTDTKPGRNAKVKKES. A phosphoserine mark is found at serine 726, serine 729, serine 730, and serine 734. Serine 873, serine 876, and serine 893 each carry phosphoserine. The segment covering 910–919 has biased composition (basic and acidic residues); sequence RQDRPVREGT. A compositionally biased stretch (basic residues) spans 943-953; the sequence is NRKKKNTKRKP. The segment covering 954-1010 has biased composition (low complexity); sequence APNTASPSISTSASASTGTTSASTTPASTTPASTTPASTTPASTSTASSQASQEGSS. 2 stretches are compositionally biased toward polar residues: residues 1031–1040 and 1054–1065; these read GTFSGSQAGR and RRPSASSPNNTA. Serine 1057 is modified (phosphoserine; by PKA).

This sequence belongs to the JHDM1 histone demethylase family. JHDM1D subfamily. In terms of assembly, component of the PHF2-ARID5B complex, at least composed of PHF2 and ARID5B. Interacts with HNF4A and NR1H4. Interacts with RELA. In terms of processing, phosphorylated by PKA on specific serine residues, leading to the formation of an active lysine demethylase complex.

It is found in the nucleus. It localises to the nucleolus. The protein localises to the chromosome. The protein resides in the centromere. Its subcellular location is the kinetochore. The catalysed reaction is N(6),N(6)-dimethyl-L-lysyl(9)-[histone H3] + 2-oxoglutarate + O2 = N(6)-methyl-L-lysyl(9)-[histone H3] + formaldehyde + succinate + CO2. With respect to regulation, enzymatically inactive by itself, and become active following phosphorylation by PKA. Functionally, lysine demethylase that demethylates both histones and non-histone proteins. Enzymatically inactive by itself, and becomes active following phosphorylation by PKA: forms a complex with ARID5B and mediates demethylation of methylated ARID5B. Demethylation of ARID5B leads to target the PHF2-ARID5B complex to target promoters, where PHF2 mediates demethylation of dimethylated 'Lys-9' of histone H3 (H3K9me2), followed by transcription activation of target genes. The PHF2-ARID5B complex acts as a coactivator of HNF4A in liver. PHF2 is recruited to trimethylated 'Lys-4' of histone H3 (H3K4me3) at rDNA promoters and promotes expression of rDNA. Involved in the activation of toll-like receptor 4 (TLR4)-target inflammatory genes in macrophages by catalyzing the demethylation of trimethylated histone H4 lysine 20 (H4K20me3) at the gene promoters. This is Lysine-specific demethylase PHF2 (Phf2) from Mus musculus (Mouse).